Consider the following 459-residue polypeptide: uncharacterized protein (459 aa).

Residues 2–60 (NLRVKQKIPLKIKRMGINGEGIGFYKRTLVFVPGALKGEEIFCQITSVKHNFVQARLLT) form the TRAM domain. 4 residues coordinate [4Fe-4S] cluster: Cys-73, Cys-79, Cys-82, and Cys-162. Residues Gln-284, Tyr-313, Asp-334, and Asp-382 each coordinate S-adenosyl-L-methionine. The active-site Nucleophile is Cys-409.

The protein belongs to the class I-like SAM-binding methyltransferase superfamily. RNA M5U methyltransferase family.

This is an uncharacterized protein from Streptococcus mutans serotype c (strain ATCC 700610 / UA159).